The primary structure comprises 152 residues: Large ribosomal subunit protein uL15 (152 aa).

Positions 1-55 are disordered; it reads MRLHELKPNEGATHKKKRVGRGIGSGHGKTSTKGQKGQTSRSGDSKLPARFEGGQ. Residues 28–42 show a composition bias toward polar residues; the sequence is GKTSTKGQKGQTSRS.

The protein belongs to the universal ribosomal protein uL15 family. Part of the 50S ribosomal subunit.

Binds to the 23S rRNA. This Sulfurihydrogenibium sp. (strain YO3AOP1) protein is Large ribosomal subunit protein uL15.